The chain runs to 548 residues: Glucose-6-phosphate isomerase 1 (548 aa).

Residue glutamate 353 is the Proton donor of the active site. Active-site residues include histidine 384 and lysine 512.

It belongs to the GPI family.

The protein resides in the cytoplasm. The catalysed reaction is alpha-D-glucose 6-phosphate = beta-D-fructose 6-phosphate. It participates in carbohydrate biosynthesis; gluconeogenesis. It functions in the pathway carbohydrate degradation; glycolysis; D-glyceraldehyde 3-phosphate and glycerone phosphate from D-glucose: step 2/4. Functionally, catalyzes the reversible isomerization of glucose-6-phosphate to fructose-6-phosphate. This Neisseria gonorrhoeae (strain ATCC 700825 / FA 1090) protein is Glucose-6-phosphate isomerase 1.